Consider the following 714-residue polypeptide: Testis-expressed protein 13D (714 aa).

2 disordered regions span residues 300 to 419 (GSFP…GCSD) and 431 to 675 (RRCK…PASF). Basic and acidic residues-rich tracts occupy residues 307–320 (SRSHSQGEGSERSQ) and 366–378 (GNRERQNQKEGPK). Residues 379–392 (RARRMHTLVFRRSH) are compositionally biased toward basic residues. Residues 403–416 (TVPQGDSRSYSQEG) show a composition bias toward polar residues. Composition is skewed to basic and acidic residues over residues 495–505 (CKPEEGPERPQ), 557–567 (CKPEEGPERPQ), and 636–646 (SRSHGVRESPK). Residues 677–706 (VPVNWKCPWCKAINFSWRTACYKCKKACVP) form a RanBP2-type zinc finger.

It belongs to the TEX13 family.

In Homo sapiens (Human), this protein is Testis-expressed protein 13D.